We begin with the raw amino-acid sequence, 267 residues long: Chlorophyll a-b binding protein 3B, chloroplastic (267 aa).

The transit peptide at 1–34 directs the protein to the chloroplast; that stretch reads MAASTMALSSSTFAGKAVKLSPSSSEISGNGRIT. The segment at 19–52 is disordered; that stretch reads KLSPSSSEISGNGRITMRKTAAKPKPASSGSPWX. Residues 153–173 traverse the membrane as a helical segment; the sequence is LVHAQSILAIWACQVVLMGAV. Positions 154, 158, 166, 174, 177, and 183 each coordinate chlorophyll b. Chlorophyll a is bound by residues lysine 214, glutamate 215, asparagine 218, arginine 220, glutamine 232, histidine 247, and alanine 256. A helical membrane pass occupies residues 221–241; sequence LAMFSMFGFFVQAIVTGKGPL. Phenylalanine 263 serves as a coordination point for chlorophyll b.

This sequence belongs to the light-harvesting chlorophyll a/b-binding (LHC) protein family. The LHC complex consists of chlorophyll a-b binding proteins. Binds at least 14 chlorophylls (8 Chl-a and 6 Chl-b) and carotenoids such as lutein and neoxanthin. is required as a cofactor. Photoregulated by reversible phosphorylation of its threonine residues.

The protein localises to the plastid. The protein resides in the chloroplast thylakoid membrane. The light-harvesting complex (LHC) functions as a light receptor, it captures and delivers excitation energy to photosystems with which it is closely associated. This chain is Chlorophyll a-b binding protein 3B, chloroplastic (CAB3B), found in Solanum lycopersicum (Tomato).